The chain runs to 323 residues: MDSKYQCVKLNDSHFMPVLGFGTYAPPEVPKSKALEATKLAIEAGFRHIDSAHLYNNEEQVGLAIRSKIADGSVKREDIFYTSKLWCNSHRPELVRPALERSLKNLQLDYVDLYLVHFPVSVKPGEEVIPKDENGKILFDTVDLCATWEAMEKCKDAGLAKSIGVSNFNRRQLEMILNKPGLKYKPVCNQVECHPYFNQRKLLDFCKSKDIVLVAYSALGSHREEKWVDPNSPVLLEDPVLCALAKKHKQTPALIALRYQLQRGVVVLAKSYNEQRIRQNMQVFDFQLTSEDMKTIDGLNRNMRYLTLDIFAGPPNYPFSDEY.

NADP(+) is bound by residues 20–24 (GFGTY) and D50. Substrate is bound at residue Y24. Y55 (proton donor) is an active-site residue. A substrate-binding site is contributed by H117. NADP(+) contacts are provided by residues 166 to 167 (SN), Q190, and 216 to 222 (YSALGSH). Residues H222 and W227 each contribute to the substrate site. 270 to 280 (KSYNEQRIRQN) serves as a coordination point for NADP(+).

It belongs to the aldo/keto reductase family. Monomer.

The protein resides in the cytoplasm. The protein localises to the cytosol. It carries out the reaction a 3alpha-hydroxysteroid + NADP(+) = a 3-oxosteroid + NADPH + H(+). The enzyme catalyses a 3alpha-hydroxysteroid + NAD(+) = a 3-oxosteroid + NADH + H(+). It catalyses the reaction (17R,20S)-17,20-dihydroxypregn-4-en-3-one + NADP(+) = 17alpha-hydroxyprogesterone + NADPH + H(+). The catalysed reaction is (17R,20S)-17,20-dihydroxypregn-4-en-3-one + NAD(+) = 17alpha-hydroxyprogesterone + NADH + H(+). It carries out the reaction (20S)-hydroxypregn-4-en-3-one + NADP(+) = progesterone + NADPH + H(+). The enzyme catalyses (20S)-hydroxypregn-4-en-3-one + NAD(+) = progesterone + NADH + H(+). It catalyses the reaction (1R,2R)-1,2-dihydrobenzene-1,2-diol + NADP(+) = catechol + NADPH + H(+). The catalysed reaction is (S)-indan-1-ol + NAD(+) = indan-1-one + NADH + H(+). It carries out the reaction (S)-indan-1-ol + NADP(+) = indan-1-one + NADPH + H(+). The enzyme catalyses 5alpha-androstane-3alpha,17beta-diol + NADP(+) = 17beta-hydroxy-5alpha-androstan-3-one + NADPH + H(+). It catalyses the reaction 5alpha-androstane-3beta,17beta-diol + NADP(+) = 17beta-hydroxy-5alpha-androstan-3-one + NADPH + H(+). The catalysed reaction is 5alpha-androstane-3alpha,17beta-diol + NAD(+) = 17beta-hydroxy-5alpha-androstan-3-one + NADH + H(+). It carries out the reaction 17beta-hydroxy-5alpha-androstan-3-one + NADP(+) = 5alpha-androstan-3,17-dione + NADPH + H(+). The enzyme catalyses androsterone + NADP(+) = 5alpha-androstan-3,17-dione + NADPH + H(+). It catalyses the reaction androsterone + NADPH + H(+) = 5alpha-androstane-3alpha,17beta-diol + NADP(+). The catalysed reaction is 5alpha-androstane-3alpha,17beta-diol + NAD(+) = androsterone + NADH + H(+). It carries out the reaction 17beta-estradiol + NADP(+) = estrone + NADPH + H(+). The enzyme catalyses 17beta-estradiol + NAD(+) = estrone + NADH + H(+). It catalyses the reaction testosterone + NADP(+) = androst-4-ene-3,17-dione + NADPH + H(+). The catalysed reaction is 20alpha-hydroxy-5beta-pregnan-3-one + NADP(+) = 5beta-pregnan-3,20-dione + NADPH + H(+). It carries out the reaction 3beta-hydroxy-5beta-pregnane-20-one + NADP(+) = 5beta-pregnan-3,20-dione + NADPH + H(+). The enzyme catalyses 3beta-hydroxy-5beta-pregnane-20-one + NADPH + H(+) = 3beta,20alpha-dihydroxy-5beta-pregnane + NADP(+). It catalyses the reaction (3beta,5alpha,17beta)-3-hydroxyandrostan-17-yl sulfate + NADP(+) = 5alpha-dihydrotestosterone sulfate + NADPH + H(+). Its pathway is steroid metabolism. In terms of biological role, cytosolic aldo-keto reductase that catalyzes the NADH and NADPH-dependent reduction of ketosteroids to hydroxysteroids. Most probably acts as a reductase in vivo since the oxidase activity measured in vitro is inhibited by physiological concentrations of NADPH. Displays a broad positional specificity acting on positions 3, 17 and 20 of steroids and regulates the metabolism of hormones like estrogens and androgens. May also reduce conjugated steroids such as 5alpha-dihydrotestosterone sulfate. Displays affinity for bile acids. The sequence is that of Aldo-keto reductase family 1 member C1 (AKR1C1) from Pongo abelii (Sumatran orangutan).